We begin with the raw amino-acid sequence, 401 residues long: S-adenosylmethionine synthase (401 aa).

Histidine 16 lines the ATP pocket. Aspartate 18 is a binding site for Mg(2+). Glutamate 44 serves as a coordination point for K(+). The L-methionine site is built by glutamate 57 and glutamine 100. Positions 100–110 (QSPDIAQGVNE) are flexible loop. ATP-binding positions include 174-176 (DAK), 241-242 (RF), aspartate 250, 256-257 (RK), alanine 273, and lysine 277. Aspartate 250 provides a ligand contact to L-methionine. Lysine 281 provides a ligand contact to L-methionine.

This sequence belongs to the AdoMet synthase family. As to quaternary structure, homotetramer; dimer of dimers. The cofactor is Mg(2+). Requires K(+) as cofactor.

The protein localises to the cytoplasm. The catalysed reaction is L-methionine + ATP + H2O = S-adenosyl-L-methionine + phosphate + diphosphate. It participates in amino-acid biosynthesis; S-adenosyl-L-methionine biosynthesis; S-adenosyl-L-methionine from L-methionine: step 1/1. Its function is as follows. Catalyzes the formation of S-adenosylmethionine (AdoMet) from methionine and ATP. The overall synthetic reaction is composed of two sequential steps, AdoMet formation and the subsequent tripolyphosphate hydrolysis which occurs prior to release of AdoMet from the enzyme. In Streptococcus equi subsp. zooepidemicus (strain MGCS10565), this protein is S-adenosylmethionine synthase.